The chain runs to 347 residues: NADH-quinone oxidoreductase subunit H (347 aa).

8 helical membrane passes run 13–33 (LIIA…VAYL), 82–102 (GVFL…WAVI), 115–135 (VGIL…IMGG), 161–181 (IGFV…TDIV), 198–218 (FLDW…ISAL), 248–268 (FLLF…LMTV), 286–306 (VPGI…FAMV), and 325–345 (VFLP…KVFG).

This sequence belongs to the complex I subunit 1 family. NDH-1 is composed of 14 different subunits. Subunits NuoA, H, J, K, L, M, N constitute the membrane sector of the complex.

The protein localises to the cell inner membrane. The enzyme catalyses a quinone + NADH + 5 H(+)(in) = a quinol + NAD(+) + 4 H(+)(out). In terms of biological role, NDH-1 shuttles electrons from NADH, via FMN and iron-sulfur (Fe-S) centers, to quinones in the respiratory chain. The immediate electron acceptor for the enzyme in this species is believed to be ubiquinone. Couples the redox reaction to proton translocation (for every two electrons transferred, four hydrogen ions are translocated across the cytoplasmic membrane), and thus conserves the redox energy in a proton gradient. This subunit may bind ubiquinone. The chain is NADH-quinone oxidoreductase subunit H from Brucella melitensis biotype 1 (strain ATCC 23456 / CCUG 17765 / NCTC 10094 / 16M).